A 251-amino-acid polypeptide reads, in one-letter code: MTTQSLEAEAKALNDRLEGLDLAGRLALVAGLEGRAVFTTSLGIEDQVITAALGSNRLDIEVATLKTGRLFNETVALIEATEEAYDILIKRYYPEKADIEDYVAQYGMNGFYESVEARHACCGVRKLRPLARALEGASYWITGLRRGQSGNRAATPYAEADLERGLIKINPLADWDIDVIRAHVAAEAIPVNPLHGRGYPSIGCEPCTRAIKPGEPERAGRWWWENDEKRECGLHVAEAASSIIPNASSAA.

Positions 121, 122, 204, and 207 each coordinate [4Fe-4S] cluster. The active-site Nucleophile; cysteine thiosulfonate intermediate is cysteine 232.

It belongs to the PAPS reductase family. CysH subfamily. [4Fe-4S] cluster serves as cofactor.

The protein resides in the cytoplasm. It catalyses the reaction [thioredoxin]-disulfide + sulfite + AMP + 2 H(+) = adenosine 5'-phosphosulfate + [thioredoxin]-dithiol. Its pathway is sulfur metabolism; hydrogen sulfide biosynthesis; sulfite from sulfate. Its function is as follows. Catalyzes the formation of sulfite from adenosine 5'-phosphosulfate (APS) using thioredoxin as an electron donor. In Sinorhizobium fredii (strain NBRC 101917 / NGR234), this protein is Adenosine 5'-phosphosulfate reductase.